The following is a 125-amino-acid chain: Large ribosomal subunit protein bL12 (125 aa).

The segment at 96 to 125 (PAPVKEGATKDEAEEIKKKIEEAGGTAELK) is disordered. Residues 102 to 117 (GATKDEAEEIKKKIEE) are compositionally biased toward basic and acidic residues.

This sequence belongs to the bacterial ribosomal protein bL12 family. In terms of assembly, homodimer. Part of the ribosomal stalk of the 50S ribosomal subunit. Forms a multimeric L10(L12)X complex, where L10 forms an elongated spine to which 2 to 4 L12 dimers bind in a sequential fashion. Binds GTP-bound translation factors.

Forms part of the ribosomal stalk which helps the ribosome interact with GTP-bound translation factors. Is thus essential for accurate translation. The chain is Large ribosomal subunit protein bL12 from Alcanivorax borkumensis (strain ATCC 700651 / DSM 11573 / NCIMB 13689 / SK2).